The following is a 391-amino-acid chain: 12-oxophytodienoate reductase 3 (391 aa).

Met1 is subject to N-acetylmethionine. An N-acetylthreonine; in 12-oxophytodienoate reductase 3, N-terminally processed modification is found at Thr2. Residues Pro31–Thr33, Gly64, and Gln106 contribute to the FMN site. Residue His186 participates in substrate binding. Tyr191 serves as the catalytic Proton donor. Arg238 contacts FMN. Residue Arg284 coordinates substrate. Residues Ser320 to Gly322 and Gly343 to Arg344 contribute to the FMN site. The Microbody targeting signal signature appears at Ser389–Leu391.

The protein belongs to the NADH:flavin oxidoreductase/NADH oxidase family. It depends on FMN as a cofactor. As to expression, expressed in green seedling, leaves, flowers (anthers, pistil, petal and stamen), and to a lower extent in roots and siliques. Specifically expressed in filament during anther dehiscence initiation.

It localises to the peroxisome. It catalyses the reaction (1S,2S)-OPC-8 + NADP(+) = (9S,13S,15Z)-12-oxophyto-10,15-dienoate + NADPH + H(+). It participates in lipid metabolism; oxylipin biosynthesis. Functionally, specifically cleaves olefinic bonds in cyclic enones. Involved in the biosynthesis of jasmonic acid (JA) and perhaps in biosynthesis or metabolism of other oxylipin signaling moleclules. Required for the spatial and temporal regulation of JA levels during dehiscence of anthers, promoting the stomium degeneration program. In vitro, reduces 9S,13S-12-oxophytodienoic acid (9S,13S-OPDA) and 9R,13R-OPDA to 9S,13S-OPC-8:0 and 9R,13R-OPC-8:0, respectively. Can detoxify the explosive 2,4,6-trinitrotoluene (TNT) in vitro by catalyzing its nitroreduction to form hydroxylamino-dinitrotoluene (HADNT). In Arabidopsis thaliana (Mouse-ear cress), this protein is 12-oxophytodienoate reductase 3.